Reading from the N-terminus, the 146-residue chain is HTH-type transcriptional regulator FarR (146 aa).

The HTH marR-type domain occupies 7-139 (HASINIGLIQ…LKDLLAELAK (133 aa)). Positions 53 to 76 (FQDLANQACILRPSLTGILTRLEK) form a DNA-binding region, H-T-H motif.

Repressor activity requires the presence of the Integration Host Factor (IHF), which binds to sequences located between FarR binding sites A and C. IHF binding to the promoter region stabilizes the binding of FarR to its binding sites A and C and as a consequence, enhances repression of the farAB operon. Its function is as follows. Negatively controls expression of the farAB operon by binding directly to the farAB promoter region. Binds to three sites (sites A, B and C) within the DNA sequence upstream of farA. Also represses its own expression. The chain is HTH-type transcriptional regulator FarR from Neisseria gonorrhoeae.